Consider the following 227-residue polypeptide: 7-cyano-7-deazaguanine synthase (227 aa).

8 to 18 contributes to the ATP binding site; the sequence is FSGGQDSTTCL. Residues cysteine 187, cysteine 196, cysteine 199, and cysteine 202 each coordinate Zn(2+).

Belongs to the QueC family. Zn(2+) serves as cofactor.

The enzyme catalyses 7-carboxy-7-deazaguanine + NH4(+) + ATP = 7-cyano-7-deazaguanine + ADP + phosphate + H2O + H(+). It functions in the pathway purine metabolism; 7-cyano-7-deazaguanine biosynthesis. In terms of biological role, catalyzes the ATP-dependent conversion of 7-carboxy-7-deazaguanine (CDG) to 7-cyano-7-deazaguanine (preQ(0)). This Shewanella pealeana (strain ATCC 700345 / ANG-SQ1) protein is 7-cyano-7-deazaguanine synthase.